A 1052-amino-acid chain; its full sequence is Focal adhesion kinase 1 (1052 aa).

Positions 1–27 are disordered; sequence MAAAYLDPNLNHTPSSSTKTHLGTGME. A2 carries the N-acetylalanine modification. At Y5 the chain carries Phosphotyrosine. Residues 10–21 show a composition bias toward polar residues; that stretch reads LNHTPSSSTKTH. T13 bears the Phosphothreonine mark. S29 and S54 each carry phosphoserine. The 321-residue stretch at 35–355 folds into the FERM domain; that stretch reads RVLKVFHYFE…GYCRLVNGAT (321 aa). K152 is covalently cross-linked (Glycyl lysine isopeptide (Lys-Gly) (interchain with G-Cter in SUMO)). Y397 and Y407 each carry phosphotyrosine. A Phosphotyrosine; by autocatalysis modification is found at Y397. ATP is bound by residues 428-434, K454, and 500-502; these read IGEGQFG and ELC. In terms of domain architecture, Protein kinase spans 431-680; the sequence is GQFGDVHQGV…ELKAQLSTIL (250 aa). D546 acts as the Proton acceptor in catalysis. Y570 bears the Phosphotyrosine mark. Phosphotyrosine; by RET and SRC occurs at positions 576 and 577. The residue at position 580 (S580) is a Phosphoserine. A compositionally biased stretch (basic and acidic residues) spans 685 to 697; that stretch reads VQQEERMRMESRR. Disordered stretches follow at residues 685–734 and 837–921; these read VQQE…PSPQ and VRLS…DRSN. The tract at residues 707–1052 is interaction with TGFB1I1; it reads GSDEAPPKPS…LKMLGQTRPH (346 aa). A Phosphoserine modification is found at S722. Residue S732 is modified to Phosphoserine; by CDK5. Over residues 837 to 849 the composition is skewed to basic and acidic residues; that stretch reads VRLSRGSIDREDG. S843 carries the post-translational modification Phosphoserine. A Phosphotyrosine modification is found at Y861. Pro residues predominate over residues 869–880; sequence PAAPPKKPPRPG. Residues 886 to 896 are compositionally biased toward polar residues; that stretch reads SNLSSISSPAD. Position 910 is a phosphoserine (S910). The segment at 912–1052 is interaction with ARHGEF28; sequence PPTANLDRSN…LKMLGQTRPH (141 aa). T914 carries the phosphothreonine modification. The residue at position 925 (Y925) is a Phosphotyrosine; by SRC.

Belongs to the protein kinase superfamily. Tyr protein kinase family. FAK subfamily. In terms of assembly, interacts with GIT1. Component of a complex that contains at least FER, CTTN and PTK2/FAK1. Interacts with BMX. Interacts with STEAP4. Interacts with ZFYVE21. Interacts with ESR1. Interacts with FGR, FLT4 and RET. Interacts with EPHA2 in resting cells; activation of EPHA2 recruits PTPN11, leading to dephosphorylation of PTK2/FAK1 and dissociation of the complex. Interacts with EPHA1 (kinase activity-dependent). Interacts with MISP. Interacts with PIAS1. Interacts with ARHGAP26 and SHC1. Interacts with RB1CC1; this inhibits PTK2/FAK1 activity and activation of downstream signaling pathways. Interacts with P53/TP53. Interacts with STAT1. Interacts with WASL. Interacts with ARHGEF7. Interacts with DCC. Interacts (via first Pro-rich region) with CAS family members (via SH3 domain), including BCAR1, BCAR3 and CASS4. Interacts with NEDD9 (via C-terminus). Interacts with SORBS1. Interacts with ARHGEF28. Interacts with SHB. Part of a complex composed of THSD1, PTK2/FAK1, TLN1 and VCL. Interacts with PXN and TLN1. Interacts with TGFB1I1. Interacts with PIK3R1 or PIK3R2. Interacts with SRC, GRB2 and GRB7. Interacts with LPXN (via LD motif 3). Interacts with CD36. Interacts with EMP2; regulates PTK2 activation and localization. Interacts with DSCAM. Interacts with AMBRA1. Interacts (when tyrosine-phosphorylated) with tensin TNS1; the interaction is increased by phosphorylation of TNS1. In terms of processing, phosphorylated on tyrosine residues upon activation, e.g. upon integrin signaling. Tyr-397 is the major autophosphorylation site, but other kinases can also phosphorylate this residue. Phosphorylation at Tyr-397 promotes interaction with SRC and SRC family members, leading to phosphorylation at Tyr-576, Tyr-577 and at additional tyrosine residues. FGR promotes phosphorylation at Tyr-397 and Tyr-576. FER promotes phosphorylation at Tyr-577, Tyr-861 and Tyr-925, even when cells are not adherent. Tyr-397, Tyr-576 and Ser-722 are phosphorylated only when cells are adherent. Phosphorylation at Tyr-397 is important for interaction with BMX, PIK3R1 and SHC1. Phosphorylation at Tyr-925 is important for interaction with GRB2. Dephosphorylated by PTPN11; PTPN11 is recruited to PTK2 via EPHA2 (tyrosine phosphorylated). Microtubule-induced dephosphorylation at Tyr-397 is crucial for the induction of focal adhesion disassembly; this dephosphorylation could be catalyzed by PTPN11 and regulated by ZFYVE21. Phosphorylation on tyrosine residues is enhanced by NTN1. Post-translationally, sumoylated; this enhances autophosphorylation.

The protein resides in the cell junction. The protein localises to the focal adhesion. Its subcellular location is the cell membrane. It localises to the cytoplasm. It is found in the perinuclear region. The protein resides in the cell cortex. The protein localises to the cytoskeleton. Its subcellular location is the microtubule organizing center. It localises to the centrosome. It is found in the nucleus. The protein resides in the cilium basal body. The enzyme catalyses L-tyrosyl-[protein] + ATP = O-phospho-L-tyrosyl-[protein] + ADP + H(+). With respect to regulation, subject to autoinhibition, mediated by interactions between the FERM domain and the kinase domain. Activated by autophosphorylation at Tyr-397. This promotes interaction with SRC and phosphorylation at Tyr-576 and Tyr-577 in the kinase activation loop by SRC. Phosphorylation at Tyr-397, Tyr-576 and Tyr-577 is required for maximal kinase activity. Functionally, non-receptor protein-tyrosine kinase that plays an essential role in regulating cell migration, adhesion, spreading, reorganization of the actin cytoskeleton, formation and disassembly of focal adhesions and cell protrusions, cell cycle progression, cell proliferation and apoptosis. Required for early embryonic development and placenta development. Required for embryonic angiogenesis, normal cardiomyocyte migration and proliferation, and normal heart development. Regulates axon growth and neuronal cell migration, axon branching and synapse formation; required for normal development of the nervous system. Plays a role in osteogenesis and differentiation of osteoblasts. Functions in integrin signal transduction, but also in signaling downstream of numerous growth factor receptors, G-protein coupled receptors (GPCR), EPHA2, netrin receptors and LDL receptors. Forms multisubunit signaling complexes with SRC and SRC family members upon activation; this leads to the phosphorylation of additional tyrosine residues, creating binding sites for scaffold proteins, effectors and substrates. Regulates numerous signaling pathways. Promotes activation of phosphatidylinositol 3-kinase and the AKT1 signaling cascade. Promotes activation of MAPK1/ERK2, MAPK3/ERK1 and the MAP kinase signaling cascade. Promotes localized and transient activation of guanine nucleotide exchange factors (GEFs) and GTPase-activating proteins (GAPs), and thereby modulates the activity of Rho family GTPases. Signaling via CAS family members mediates activation of RAC1. Phosphorylates NEDD9 following integrin stimulation. Recruits the ubiquitin ligase MDM2 to P53/TP53 in the nucleus, and thereby regulates P53/TP53 activity, P53/TP53 ubiquitination and proteasomal degradation. Phosphorylates SRC; this increases SRC kinase activity. Phosphorylates ACTN1, ARHGEF7, GRB7, RET and WASL. Promotes phosphorylation of PXN and STAT1; most likely PXN and STAT1 are phosphorylated by a SRC family kinase that is recruited to autophosphorylated PTK2/FAK1, rather than by PTK2/FAK1 itself. Promotes phosphorylation of BCAR1; GIT2 and SHC1; this requires both SRC and PTK2/FAK1. Promotes phosphorylation of BMX and PIK3R1. In terms of biological role, does not contain a kinase domain and inhibits PTK2/FAK1 phosphorylation and signaling. Its enhanced expression can attenuate the nuclear accumulation of LPXN and limit its ability to enhance serum response factor (SRF)-dependent gene transcription. This Mus musculus (Mouse) protein is Focal adhesion kinase 1.